A 355-amino-acid chain; its full sequence is Beta-porphyranase C (355 aa).

The N-terminal stretch at 1–18 (MIKTLKRIPLVFLIAIMA) is a signal peptide. Residue Cys19 is the site of N-palmitoyl cysteine attachment. Cys19 carries S-diacylglycerol cysteine lipidation. Residues 22–72 (SGDNGKDKVEEQEQAQEQGEKKGQGEERDKEDGIDGLQPTFLADQDPKPDD) form a disordered region. The span at 39–54 (QGEKKGQGEERDKEDG) shows a compositional bias: basic and acidic residues. The region spanning 71-355 (DDKKWIKVEG…WVRVWQLEDL (285 aa)) is the GH16 domain. 3 residues coordinate substrate: Trp110, Glu208, and Glu213. Glu208 (nucleophile) is an active-site residue. Catalysis depends on Glu213, which acts as the Proton donor.

This sequence belongs to the glycosyl hydrolase 16 family.

Its subcellular location is the cell outer membrane. The enzyme catalyses Hydrolysis of beta-D-galactopyranose-(1-&gt;4)-alpha-L-galactopyranose-6-sulfate linkages in porphyran.. Functionally, cleaves the sulfated polysaccharide porphyran at the (1-&gt;4) linkages between beta-D-galactopyranose and alpha-L-galactopyranose-6-sulfate, forming mostly the disaccharide alpha-L-galactopyranose-6-sulfate-(1-&gt;3)-beta-D-galactose. This chain is Beta-porphyranase C (porC), found in Zobellia galactanivorans (strain DSM 12802 / CCUG 47099 / CIP 106680 / NCIMB 13871 / Dsij).